The primary structure comprises 115 residues: Cyclin-dependent protein kinase inhibitor SMR3 (115 aa).

Positions 17-36 (KIRLPTRPELDIPDSDHEDP) are enriched in basic and acidic residues. The interval 17–82 (KIRLPTRPEL…RSSGTKRKLT (66 aa)) is disordered. Residues 67-81 (RKPKPNRSSGTKRKL) are compositionally biased toward basic residues.

Interacts with CDKA-1 and D-type cyclins. In terms of tissue distribution, expressed at low levels in roots and stems.

It localises to the nucleus. Functionally, probable cyclin-dependent protein kinase (CDK) inhibitor that functions as a repressor of mitosis in the endoreduplication cell cycle. The protein is Cyclin-dependent protein kinase inhibitor SMR3 of Arabidopsis thaliana (Mouse-ear cress).